Here is a 431-residue protein sequence, read N- to C-terminus: Protein translocase subunit SecY (431 aa).

10 helical membrane passes run 18–38, 64–84, 116–136, 146–166, 175–195, 214–234, 262–282, 309–329, 369–389, and 390–410; these read IIFT…PVPH, LFNF…SIII, FTIV…NNMA, VGTY…LMWL, VGNG…PQTI, IIKV…VIFI, LPLK…AFIT, PVGM…YAFV, FVGS…VNIA, and GLPS…GVAL.

Belongs to the SecY/SEC61-alpha family. As to quaternary structure, component of the Sec protein translocase complex. Heterotrimer consisting of SecY, SecE and SecG subunits. The heterotrimers can form oligomers, although 1 heterotrimer is thought to be able to translocate proteins. Interacts with the ribosome. Interacts with SecDF, and other proteins may be involved. Interacts with SecA.

The protein resides in the cell membrane. The central subunit of the protein translocation channel SecYEG. Consists of two halves formed by TMs 1-5 and 6-10. These two domains form a lateral gate at the front which open onto the bilayer between TMs 2 and 7, and are clamped together by SecE at the back. The channel is closed by both a pore ring composed of hydrophobic SecY resides and a short helix (helix 2A) on the extracellular side of the membrane which forms a plug. The plug probably moves laterally to allow the channel to open. The ring and the pore may move independently. This Bacillus licheniformis (strain ATCC 14580 / DSM 13 / JCM 2505 / CCUG 7422 / NBRC 12200 / NCIMB 9375 / NCTC 10341 / NRRL NRS-1264 / Gibson 46) protein is Protein translocase subunit SecY.